Reading from the N-terminus, the 114-residue chain is Probable non-functional T cell receptor beta variable 6-7 (114 aa).

The N-terminal stretch at 1–21 (MSLGLLCCVAFSLLWAGPMNA) is a signal peptide. The Ig-like domain maps to 22–114 (GVTQTPKFHV…TSVYFCASSY (93 aa)). Cysteines 42 and 110 form a disulfide. N84 is a glycosylation site (N-linked (GlcNAc...) asparagine).

In terms of assembly, alpha-beta TR is a heterodimer composed of an alpha and beta chain; disulfide-linked. The alpha-beta TR is associated with the transmembrane signaling CD3 coreceptor proteins to form the TR-CD3 (TcR or TCR). The assembly of alpha-beta TR heterodimers with CD3 occurs in the endoplasmic reticulum where a single alpha-beta TR heterodimer associates with one CD3D-CD3E heterodimer, one CD3G-CD3E heterodimer and one CD247 homodimer forming a stable octameric structure. CD3D-CD3E and CD3G-CD3E heterodimers preferentially associate with TR alpha and TR beta chains, respectively. The association of the CD247 homodimer is the last step of TcR assembly in the endoplasmic reticulum and is required for transport to the cell surface.

Its subcellular location is the cell membrane. Functionally, probable non-functional open reading frame (ORF) of V region of the variable domain of T cell receptor (TR) beta chain. Non-functional ORF generally cannot participate in the synthesis of a productive T cell receptor (TR) chain due to altered V-(D)-J or switch recombination and/or splicing site (at mRNA level) and/or conserved amino acid change (protein level). Alpha-beta T cell receptors are antigen specific receptors which are essential to the immune response and are present on the cell surface of T lymphocytes. Recognize peptide-major histocompatibility (MH) (pMH) complexes that are displayed by antigen presenting cells (APC), a prerequisite for efficient T cell adaptive immunity against pathogens. Binding of alpha-beta TR to pMH complex initiates TR-CD3 clustering on the cell surface and intracellular activation of LCK that phosphorylates the ITAM motifs of CD3G, CD3D, CD3E and CD247 enabling the recruitment of ZAP70. In turn ZAP70 phosphorylates LAT, which recruits numerous signaling molecules to form the LAT signalosome. The LAT signalosome propagates signal branching to three major signaling pathways, the calcium, the mitogen-activated protein kinase (MAPK) kinase and the nuclear factor NF-kappa-B (NF-kB) pathways, leading to the mobilization of transcription factors that are critical for gene expression and essential for T cell growth and differentiation. The T cell repertoire is generated in the thymus, by V-(D)-J rearrangement. This repertoire is then shaped by intrathymic selection events to generate a peripheral T cell pool of self-MH restricted, non-autoaggressive T cells. Post-thymic interaction of alpha-beta TR with the pMH complexes shapes TR structural and functional avidity. This is Probable non-functional T cell receptor beta variable 6-7 from Homo sapiens (Human).